The chain runs to 931 residues: Isoleucine--tRNA ligase (931 aa).

The 'HIGH' region signature appears at 58 to 68; the sequence is PYANGHLHCGH. Residue E559 coordinates L-isoleucyl-5'-AMP. The 'KMSKS' region motif lies at 600–604; that stretch reads KLSKS. Residue K603 coordinates ATP. Residues C894, C897, C914, and C917 each coordinate Zn(2+).

This sequence belongs to the class-I aminoacyl-tRNA synthetase family. IleS type 1 subfamily. As to quaternary structure, monomer. The cofactor is Zn(2+).

The protein resides in the cytoplasm. The catalysed reaction is tRNA(Ile) + L-isoleucine + ATP = L-isoleucyl-tRNA(Ile) + AMP + diphosphate. In terms of biological role, catalyzes the attachment of isoleucine to tRNA(Ile). As IleRS can inadvertently accommodate and process structurally similar amino acids such as valine, to avoid such errors it has two additional distinct tRNA(Ile)-dependent editing activities. One activity is designated as 'pretransfer' editing and involves the hydrolysis of activated Val-AMP. The other activity is designated 'posttransfer' editing and involves deacylation of mischarged Val-tRNA(Ile). The chain is Isoleucine--tRNA ligase from Legionella pneumophila (strain Corby).